The sequence spans 165 residues: Protein SprT (165 aa).

The SprT-like domain maps to 10–158 (EACYRQAEHF…CRRCKATLVF (149 aa)). His-69 contributes to the Zn(2+) binding site. The active site involves Glu-70. His-73 lines the Zn(2+) pocket.

Belongs to the SprT family. The cofactor is Zn(2+).

The protein resides in the cytoplasm. This Pseudomonas aeruginosa (strain LESB58) protein is Protein SprT.